Here is a 312-residue protein sequence, read N- to C-terminus: tRNA (adenine(58)-N(1))-methyltransferase catalytic subunit trmt61a (312 aa).

S-adenosyl-L-methionine is bound by residues Leu-85, 112–114, Glu-133, Arg-138, 161–162, and Asp-183; these read SGS and DA.

It belongs to the class I-like SAM-binding methyltransferase superfamily. TRM61 family. In terms of assembly, heterotetramer; composed of two copies of trmt6 and two copies of trmt61a.

Its subcellular location is the nucleus. The enzyme catalyses adenosine(58) in tRNA + S-adenosyl-L-methionine = N(1)-methyladenosine(58) in tRNA + S-adenosyl-L-homocysteine + H(+). Inhibited by calcium and magnesium ions and spermidine. Enhanced by KCl, NaCl and NH(4)Cl in concentrations from 0.1-0.25 M. Concentrations of more than 0.3 M are inhibitory. In terms of biological role, catalytic subunit of tRNA (adenine-N(1)-)-methyltransferase, which catalyzes the formation of N(1)-methyladenine at position 58 (m1A58) in initiator methionyl-tRNA. This is tRNA (adenine(58)-N(1))-methyltransferase catalytic subunit trmt61a (trmt61a) from Dictyostelium discoideum (Social amoeba).